Consider the following 177-residue polypeptide: Coatomer subunit zeta-3 (177 aa).

Belongs to the adaptor complexes small subunit family. As to quaternary structure, oligomeric complex that consists of at least the alpha, beta, beta', gamma, delta, epsilon and zeta subunits.

The protein localises to the cytoplasm. It localises to the golgi apparatus membrane. It is found in the cytoplasmic vesicle. Its subcellular location is the COPI-coated vesicle membrane. Functionally, the coatomer is a cytosolic protein complex that binds to dilysine motifs and reversibly associates with Golgi non-clathrin-coated vesicles, which further mediate biosynthetic protein transport from the ER, via the Golgi up to the trans Golgi network. Coatomer complex is required for budding from Golgi membranes, and is essential for the retrograde Golgi-to-ER transport of dilysine-tagged proteins. The zeta subunit may be involved in regulating the coat assembly and, hence, the rate of biosynthetic protein transport due to its association-dissociation properties with the coatomer complex. The polypeptide is Coatomer subunit zeta-3 (Oryza sativa subsp. japonica (Rice)).